The chain runs to 89 residues: Small ribosomal subunit protein uS15 (89 aa).

Residues 1-11 (MSITAERKAEV) show a composition bias toward basic and acidic residues. The tract at residues 1-25 (MSITAERKAEVIKTNARKSGDTGSP) is disordered.

The protein belongs to the universal ribosomal protein uS15 family. Part of the 30S ribosomal subunit. Forms a bridge to the 50S subunit in the 70S ribosome, contacting the 23S rRNA.

In terms of biological role, one of the primary rRNA binding proteins, it binds directly to 16S rRNA where it helps nucleate assembly of the platform of the 30S subunit by binding and bridging several RNA helices of the 16S rRNA. Its function is as follows. Forms an intersubunit bridge (bridge B4) with the 23S rRNA of the 50S subunit in the ribosome. This chain is Small ribosomal subunit protein uS15, found in Nitrobacter hamburgensis (strain DSM 10229 / NCIMB 13809 / X14).